The primary structure comprises 223 residues: AN1-type zinc finger protein 6 (223 aa).

The A20-type zinc-finger motif lies at 8–42; sequence SQAPMLCSTGCGFYGNPRTNGMCSVCYKEHLQRQN. Cysteine 14, cysteine 18, cysteine 30, and cysteine 33 together coordinate Zn(2+). The interval 41 to 155 is disordered; sequence QNSSNGRISP…PSEEQSKSLE (115 aa). Residue serine 49 is modified to Phosphoserine. Polar residues-rich tracts occupy residues 77–110 and 137–148; these read ALDS…STSV and SSVSDTTQQPSE. An AN1-type zinc finger spans residues 158-204; it reads KQKKNRCFMCRKKVGLTGFECRCGNVYCGVHRYSDVHNCSYNYKADA. The Zn(2+) site is built by cysteine 164, cysteine 167, cysteine 178, cysteine 180, cysteine 185, histidine 188, histidine 194, and cysteine 196. Lysine 219 is subject to N6-acetyllysine.

Interacts with PKN1. Interacts with TRAF2. Interacts with mono- and polyubiquitin. Interacts with PEX6. Interacts with PEX5 (Cys-linked ubiquitinated).

It localises to the cytoplasm. Involved in regulation of TNF-alpha induced NF-kappa-B activation and apoptosis. Involved in modulation of 'Lys-48'-linked polyubiquitination status of TRAF2 and decreases association of TRAF2 with RIPK1. Required for PTS1 target sequence-dependent protein import into peroxisomes and PEX5 stability; may cooperate with PEX6. In vitro involved in PEX5 export from the cytosol to peroxisomes. The protein is AN1-type zinc finger protein 6 (Zfand6) of Mus musculus (Mouse).